Here is a 42-residue protein sequence, read N- to C-terminus: Bacteriocin bavaricin-MN (42 aa).

Cysteines 10 and 15 form a disulfide.

Belongs to the bacteriocin class IIA/YGNGV family.

It is found in the secreted. Its function is as follows. Has antimicrobial activity. The sequence is that of Bacteriocin bavaricin-MN from Latilactobacillus sakei (Lactobacillus sakei).